Here is a 473-residue protein sequence, read N- to C-terminus: Ribulose bisphosphate carboxylase large chain (473 aa).

Substrate-binding residues include Asn116 and Thr166. Lys168 serves as the catalytic Proton acceptor. Lys170 is a binding site for substrate. The Mg(2+) site is built by Lys194, Asp196, and Glu197. An N6-carboxylysine modification is found at Lys194. The active-site Proton acceptor is His287. 3 residues coordinate substrate: Arg288, His320, and Ser372.

The protein belongs to the RuBisCO large chain family. Type I subfamily. Heterohexadecamer of 8 large chains and 8 small chains. It depends on Mg(2+) as a cofactor.

It carries out the reaction 2 (2R)-3-phosphoglycerate + 2 H(+) = D-ribulose 1,5-bisphosphate + CO2 + H2O. The catalysed reaction is D-ribulose 1,5-bisphosphate + O2 = 2-phosphoglycolate + (2R)-3-phosphoglycerate + 2 H(+). In terms of biological role, ruBisCO catalyzes two reactions: the carboxylation of D-ribulose 1,5-bisphosphate, the primary event in carbon dioxide fixation, as well as the oxidative fragmentation of the pentose substrate. Both reactions occur simultaneously and in competition at the same active site. This chain is Ribulose bisphosphate carboxylase large chain, found in Alkalilimnicola ehrlichii (strain ATCC BAA-1101 / DSM 17681 / MLHE-1).